Reading from the N-terminus, the 290-residue chain is Protein MGF 110-9L (290 aa).

Helical transmembrane passes span 1 to 19 (MKVI…VIQS), 128 to 148 (TENI…IGYI), and 163 to 183 (LLIF…IIMN). N-linked (GlcNAc...) asparagine; by host glycosylation is found at Asn242 and Asn267.

It belongs to the asfivirus MGF 110 family.

The protein localises to the host membrane. In terms of biological role, plays a role in virus cell tropism, and may be required for efficient virus replication in macrophages. The sequence is that of Protein MGF 110-9L from Ornithodoros (relapsing fever ticks).